Here is a 262-residue protein sequence, read N- to C-terminus: Phosphonates import ATP-binding protein PhnC (262 aa).

The ABC transporter domain maps to 5-253 (IRVEKLAKTF…RFDHLYRSIN (249 aa)). An ATP-binding site is contributed by 37–44 (GPSGSGKS).

Belongs to the ABC transporter superfamily. Phosphonates importer (TC 3.A.1.9.1) family. As to quaternary structure, the complex is composed of two ATP-binding proteins (PhnC), two transmembrane proteins (PhnE) and a solute-binding protein (PhnD).

The protein resides in the cell inner membrane. It carries out the reaction phosphonate(out) + ATP + H2O = phosphonate(in) + ADP + phosphate + H(+). In terms of biological role, part of the ABC transporter complex PhnCDE involved in phosphonates import. Responsible for energy coupling to the transport system. The sequence is that of Phosphonates import ATP-binding protein PhnC from Escherichia coli (strain UTI89 / UPEC).